A 368-amino-acid chain; its full sequence is 2-deoxy-scyllo-inosose synthase (368 aa).

NAD(+)-binding positions include Asp-42, Glu-72–Lys-75, Gly-104–Asn-108, Thr-128–Thr-129, Ser-139–Lys-141, Lys-150–Asn-151, and Gln-176. Lys-141 is a catalytic residue. Glu-183 is a Co(2+) binding site. Glu-243 is a catalytic residue. Co(2+)-binding residues include His-246 and His-262.

The protein belongs to the sugar phosphate cyclases superfamily. DOI synthase family. In terms of assembly, was isolated as a heterodimeric enzyme comprising of BtrC and a smaller polypeptide further identified as PdxT by sequence homology. Homodimer in solution. NAD(+) is required as a cofactor. The cofactor is Co(2+).

It carries out the reaction D-glucose 6-phosphate = 2-deoxy-L-scyllo-inosose + phosphate. It functions in the pathway metabolic intermediate biosynthesis; 2-deoxystreptamine biosynthesis; 2-deoxystreptamine from D-glucose 6-phosphate: step 1/4. Its pathway is antibiotic biosynthesis; butirosin biosynthesis. With respect to regulation, strongly inhibited by EDTA, zinc and Cu(2+). Catalyzes the intramolecular carbocycle formation from D-glucose-6-phosphate to 2-deoxy-scyllo-inosose (DOI). The sequence is that of 2-deoxy-scyllo-inosose synthase (btrC) from Niallia circulans (Bacillus circulans).